A 246-amino-acid chain; its full sequence is MSGHSKWHNIQAKKGKVDAKRGKIFTKIGKEIVVAVKQGGPSADSNPRLRDVIAKAKANNMPNDTIERSIKKASGELNAVDYETITYEGYGPAGIAVLVDVLTDNKNRSAGNVRYAFTKQGGNMGSTGCVSFMFQSKGQIVIEKKDGLDEDELMMMALDAGAEDFESEDEVYVVTTSQEDFGTVREALEAEGLEFLEAEIKMVPDTYTAIDEDTATKFQKMLDVLEDDDDVQNVYHNAEFPEGWEE.

Belongs to the TACO1 family.

The protein localises to the cytoplasm. This is Probable transcriptional regulatory protein CLJ_B3338 from Clostridium botulinum (strain 657 / Type Ba4).